The following is a 496-amino-acid chain: MLKIKLEKTTFENAKAECSLVFIVNKDFSHAWVKNKELLETFKYEGEGVFLDQENKILYAGVKEDDVHLLRESACLAVRTLKKLAFKSVKVGVYTCGTHSKDNALLENLKALFLGLKLGLYEYDTFKSNKKESVLKEAIVALELHKPCEKTCANSLEKSAKEALKYAEIMTESLNIVRDLVNTPPMIGTPVYMAEVAQKVAKENHLEIHVYDEKFLEEKKMNAFLAVNKASLGVNPPRLIHLVYKPKKAKKKIALVGKGLTYDCGGLSLKPADYMVTMKADKGGGSAVIGLLNVLAKLGVEAEVHGIIGATENMIGPAAYKPDDILISKEGKSIEVRNTDAEGRLVLADCLSYAQDLNPDVIVDFATLTGACVVGLGEFTSAIMGHNEELKNLFETSGLESGELLAKLPFNRHLKKLIESKIADVCNISSSRYGGAITAGLFLNEFIRDEFKDKWLHIDIAGPAYVEKEWDVNSFGASGAGVRACTAFVEELLKKA.

Positions 258 and 263 each coordinate Mn(2+). Lys270 is an active-site residue. Asp281, Asp340, and Glu342 together coordinate Mn(2+). Residue Arg344 is part of the active site.

This sequence belongs to the peptidase M17 family. The cofactor is Mn(2+).

It localises to the cytoplasm. It catalyses the reaction Release of an N-terminal amino acid, Xaa-|-Yaa-, in which Xaa is preferably Leu, but may be other amino acids including Pro although not Arg or Lys, and Yaa may be Pro. Amino acid amides and methyl esters are also readily hydrolyzed, but rates on arylamides are exceedingly low.. It carries out the reaction Release of an N-terminal amino acid, preferentially leucine, but not glutamic or aspartic acids.. Presumably involved in the processing and regular turnover of intracellular proteins. Catalyzes the removal of unsubstituted N-terminal amino acids from various peptides. The chain is Probable cytosol aminopeptidase from Helicobacter pylori (strain G27).